The following is a 351-amino-acid chain: Protein RecA (351 aa).

Position 64–71 (64–71) interacts with ATP; it reads GPESSGKT. The segment at 330–351 is disordered; that stretch reads DRFLQNGGPDPDDGDGDATAEM. The span at 339–351 shows a compositional bias: acidic residues; the sequence is DPDDGDGDATAEM.

It belongs to the RecA family.

It localises to the cytoplasm. In terms of biological role, can catalyze the hydrolysis of ATP in the presence of single-stranded DNA, the ATP-dependent uptake of single-stranded DNA by duplex DNA, and the ATP-dependent hybridization of homologous single-stranded DNAs. It interacts with LexA causing its activation and leading to its autocatalytic cleavage. The protein is Protein RecA of Rhizobium leguminosarum bv. viciae.